A 485-amino-acid chain; its full sequence is UDP-N-acetylmuramate--L-alanine ligase (485 aa).

120–126 (GSHGKTT) contributes to the ATP binding site.

The protein belongs to the MurCDEF family.

The protein localises to the cytoplasm. The catalysed reaction is UDP-N-acetyl-alpha-D-muramate + L-alanine + ATP = UDP-N-acetyl-alpha-D-muramoyl-L-alanine + ADP + phosphate + H(+). Its pathway is cell wall biogenesis; peptidoglycan biosynthesis. Cell wall formation. In Rickettsia conorii (strain ATCC VR-613 / Malish 7), this protein is UDP-N-acetylmuramate--L-alanine ligase.